The following is a 294-amino-acid chain: Nucleotide-binding protein A2cp1_0165 (294 aa).

Position 17 to 24 (17 to 24 (GVSGSGKS)) interacts with ATP. 68–71 (DARE) serves as a coordination point for GTP.

The protein belongs to the RapZ-like family.

Displays ATPase and GTPase activities. This is Nucleotide-binding protein A2cp1_0165 from Anaeromyxobacter dehalogenans (strain 2CP-1 / ATCC BAA-258).